The following is a 744-amino-acid chain: NADH-ubiquinone oxidoreductase 78 kDa subunit, mitochondrial (744 aa).

Over residues 1–10 (MLRSTLSRSA) the composition is skewed to polar residues. The segment at 1 to 26 (MLRSTLSRSAWRTGRHQAARNASRAF) is disordered. The transit peptide at 1-33 (MLRSTLSRSAWRTGRHQAARNASRAFSATAQRP) directs the protein to the mitochondrion. Residues 34–112 (AEVELTIDGK…GMVVKTNSPL (79 aa)) enclose the 2Fe-2S ferredoxin-type domain. The [2Fe-2S] cluster site is built by Cys68, Cys79, Cys82, and Cys96. Residues 112-151 (LTHKAREGVMEFLLANHPLDCPICDQGGECDLQDQSMRYG) enclose the 4Fe-4S His(Cys)3-ligated-type domain. [4Fe-4S] cluster contacts are provided by His128, Cys132, Cys135, Cys141, Cys182, Cys185, Cys188, and Cys232. The 57-residue stretch at 251-307 (LKKTESIDVLDGLGSNIRVDTRGLEVMRILPRLNDEVNEEWINDKTRFACDGLKTQR) folds into the 4Fe-4S Mo/W bis-MGD-type domain.

This sequence belongs to the complex I 75 kDa subunit family. Complex I is composed of about 40 different subunits. [2Fe-2S] cluster serves as cofactor. It depends on [4Fe-4S] cluster as a cofactor.

It is found in the mitochondrion inner membrane. The enzyme catalyses a ubiquinone + NADH + 5 H(+)(in) = a ubiquinol + NAD(+) + 4 H(+)(out). In terms of biological role, core subunit of the mitochondrial membrane respiratory chain NADH dehydrogenase (Complex I) that is believed to belong to the minimal assembly required for catalysis. Complex I functions in the transfer of electrons from NADH to the respiratory chain. The immediate electron acceptor for the enzyme is believed to be ubiquinone. This is the largest subunit of complex I and it is a component of the iron-sulfur (IP) fragment of the enzyme. It may form part of the active site crevice where NADH is oxidized. This Neurospora crassa (strain ATCC 24698 / 74-OR23-1A / CBS 708.71 / DSM 1257 / FGSC 987) protein is NADH-ubiquinone oxidoreductase 78 kDa subunit, mitochondrial (nuo78).